We begin with the raw amino-acid sequence, 109 residues long: FAD assembly factor SdhE (109 aa).

The tract at residues 1–22 (MQDNFTASSPSSSSSASGVAED) is disordered. Over residues 7 to 17 (ASSPSSSSSAS) the composition is skewed to low complexity.

It belongs to the SdhE FAD assembly factor family.

It is found in the cytoplasm. Its function is as follows. An FAD assembly protein, which accelerates covalent attachment of the cofactor into other proteins. Plays an essential role in the assembly of succinate dehydrogenase (SDH, respiratory complex II), an enzyme complex that is a component of both the tricarboxylic acid cycle and the electron transport chain, and which couples the oxidation of succinate to fumarate with the reduction of ubiquinone (coenzyme Q) to ubiquinol. Required for flavinylation of SdhA, when the SDH operon and this gene are overexpressed in G.oxydans. Flavinylation of SdhA is detected only in the presence of sdhE. This chain is FAD assembly factor SdhE, found in Acetobacter pasteurianus (strain NBRC 105184 / IFO 3283-01).